The chain runs to 143 residues: Holo-[acyl-carrier-protein] synthase (143 aa).

The Mg(2+) site is built by Asp-9 and Glu-63.

Belongs to the P-Pant transferase superfamily. AcpS family. Requires Mg(2+) as cofactor.

The protein resides in the cytoplasm. It catalyses the reaction apo-[ACP] + CoA = holo-[ACP] + adenosine 3',5'-bisphosphate + H(+). Its function is as follows. Transfers the 4'-phosphopantetheine moiety from coenzyme A to a Ser of acyl-carrier-protein. The sequence is that of Holo-[acyl-carrier-protein] synthase from Burkholderia mallei (strain NCTC 10247).